A 234-amino-acid chain; its full sequence is ATP synthase subunit a 2 (234 aa).

Transmembrane regions (helical) follow at residues 29–49 (FFQH…VGLL), 90–110 (LIAT…IPGF), 116–136 (SLNT…IVGV), 147–167 (FMGP…IGHL), 186–206 (IVLM…MMLM), and 207–227 (GILV…IYIA).

The protein belongs to the ATPase A chain family. As to quaternary structure, F-type ATPases have 2 components, CF(1) - the catalytic core - and CF(0) - the membrane proton channel. CF(1) has five subunits: alpha(3), beta(3), gamma(1), delta(1), epsilon(1). CF(0) has three main subunits: a(1), b(2) and c(9-12). The alpha and beta chains form an alternating ring which encloses part of the gamma chain. CF(1) is attached to CF(0) by a central stalk formed by the gamma and epsilon chains, while a peripheral stalk is formed by the delta and b chains.

The protein resides in the cell inner membrane. In terms of biological role, key component of the proton channel; it plays a direct role in the translocation of protons across the membrane. This Syntrophotalea carbinolica (strain DSM 2380 / NBRC 103641 / GraBd1) (Pelobacter carbinolicus) protein is ATP synthase subunit a 2.